Consider the following 281-residue polypeptide: Large ribosomal subunit protein uL2 (281 aa).

A disordered region spans residues 223–281; that stretch reads VRGSVMNPVDHPHGGGEGKQPVGRKSPLTPWGKIALGVKTRKTKKSSNKLILRRRKDAK. Residues 261–281 are compositionally biased toward basic residues; it reads KTRKTKKSSNKLILRRRKDAK.

It belongs to the universal ribosomal protein uL2 family. As to quaternary structure, part of the 50S ribosomal subunit. Forms a bridge to the 30S subunit in the 70S ribosome.

Functionally, one of the primary rRNA binding proteins. Required for association of the 30S and 50S subunits to form the 70S ribosome, for tRNA binding and peptide bond formation. It has been suggested to have peptidyltransferase activity; this is somewhat controversial. Makes several contacts with the 16S rRNA in the 70S ribosome. This is Large ribosomal subunit protein uL2 from Mycoplasmopsis synoviae (strain 53) (Mycoplasma synoviae).